A 341-amino-acid chain; its full sequence is L-threonine 3-dehydrogenase (341 aa).

Cysteine 38 contributes to the Zn(2+) binding site. Residues threonine 40 and histidine 43 each act as charge relay system in the active site. Zn(2+) is bound by residues histidine 63, glutamate 64, cysteine 93, cysteine 96, cysteine 99, and cysteine 107. NAD(+)-binding positions include isoleucine 175, aspartate 195, arginine 200, 262–264 (LGI), and 286–287 (IY).

This sequence belongs to the zinc-containing alcohol dehydrogenase family. As to quaternary structure, homotetramer. Requires Zn(2+) as cofactor.

It localises to the cytoplasm. The catalysed reaction is L-threonine + NAD(+) = (2S)-2-amino-3-oxobutanoate + NADH + H(+). The protein operates within amino-acid degradation; L-threonine degradation via oxydo-reductase pathway; glycine from L-threonine: step 1/2. In terms of biological role, catalyzes the NAD(+)-dependent oxidation of L-threonine to 2-amino-3-ketobutyrate. The sequence is that of L-threonine 3-dehydrogenase from Escherichia coli O139:H28 (strain E24377A / ETEC).